We begin with the raw amino-acid sequence, 438 residues long: Adenylyltransferase and sulfurtransferase MOCS3 (438 aa).

ATP-binding positions include Gly80, Asp101, 108 to 112 (TNLHR), Lys125, and 169 to 170 (DN). 2 residues coordinate Zn(2+): Cys210 and Cys213. The active-site Glycyl thioester intermediate; for adenylyltransferase activity is the Cys227. Residues Cys285 and Cys288 each contribute to the Zn(2+) site. A Rhodanese domain is found at 335-436 (SKQRHVLVDV…WTRNVDKEFP (102 aa)). The Cysteine persulfide intermediate; for sulfurtransferase activity role is filled by Cys392.

The protein in the N-terminal section; belongs to the HesA/MoeB/ThiF family. UBA4 subfamily. Zn(2+) is required as a cofactor.

The protein localises to the cytoplasm. Its subcellular location is the cytosol. It catalyses the reaction [molybdopterin-synthase sulfur-carrier protein]-C-terminal Gly-Gly + ATP + H(+) = [molybdopterin-synthase sulfur-carrier protein]-C-terminal Gly-Gly-AMP + diphosphate. The catalysed reaction is [molybdopterin-synthase sulfur-carrier protein]-C-terminal Gly-Gly-AMP + S-sulfanyl-L-cysteinyl-[cysteine desulfurase] + AH2 = [molybdopterin-synthase sulfur-carrier protein]-C-terminal-Gly-aminoethanethioate + L-cysteinyl-[cysteine desulfurase] + A + AMP + 2 H(+). Its pathway is tRNA modification; 5-methoxycarbonylmethyl-2-thiouridine-tRNA biosynthesis. The protein operates within cofactor biosynthesis; molybdopterin biosynthesis. Functionally, plays a central role in 2-thiolation of mcm(5)S(2)U at tRNA wobble positions of cytosolic tRNA(Lys), tRNA(Glu) and tRNA(Gln). Also essential during biosynthesis of the molybdenum cofactor. Acts by mediating the C-terminal thiocarboxylation of sulfur carriers URM1 and MOCS2A. Its N-terminus first activates URM1 and MOCS2A as acyl-adenylates (-COAMP), then the persulfide sulfur on the catalytic cysteine is transferred to URM1 and MOCS2A to form thiocarboxylation (-COSH) of their C-terminus. The reaction probably involves hydrogen sulfide that is generated from the persulfide intermediate and that acts as a nucleophile towards URM1 and MOCS2A. Subsequently, a transient disulfide bond is formed. Does not use thiosulfate as sulfur donor; NFS1 probably acting as a sulfur donor for thiocarboxylation reactions. This is Adenylyltransferase and sulfurtransferase MOCS3 from Culex quinquefasciatus (Southern house mosquito).